A 182-amino-acid polypeptide reads, in one-letter code: Protein transport protein gos1 (182 aa).

Over 1–163 (MKSMLLRDSV…RKTSIRRRRD (163 aa)) the chain is Cytoplasmic. A helical; Anchor for type IV membrane protein transmembrane segment spans residues 164–181 (SIILALLISVLMLLFLFF). Position 182 (His182) is a topological domain, vesicular.

The protein belongs to the GOSR1 family. As to quaternary structure, component of a SNARE complex consisting of sed5, gos1, ykt6, and sft1.

It is found in the golgi apparatus membrane. Functionally, nonessential SNARE involved in retrograde transport within the Golgi complex. This is Protein transport protein gos1 (gos1) from Schizosaccharomyces pombe (strain 972 / ATCC 24843) (Fission yeast).